Reading from the N-terminus, the 244-residue chain is Type III pantothenate kinase (244 aa).

6-13 (DVGNTRIK) contacts ATP. Residues Tyr87 and 94–97 (GIDR) each bind substrate. Asp96 serves as the catalytic Proton acceptor. Asp117 serves as a coordination point for K(+). An ATP-binding site is contributed by Thr120. Thr172 lines the substrate pocket.

This sequence belongs to the type III pantothenate kinase family. As to quaternary structure, homodimer. The cofactor is NH4(+). K(+) serves as cofactor.

The protein localises to the cytoplasm. It catalyses the reaction (R)-pantothenate + ATP = (R)-4'-phosphopantothenate + ADP + H(+). It functions in the pathway cofactor biosynthesis; coenzyme A biosynthesis; CoA from (R)-pantothenate: step 1/5. Functionally, catalyzes the phosphorylation of pantothenate (Pan), the first step in CoA biosynthesis. The protein is Type III pantothenate kinase of Flavobacterium johnsoniae (strain ATCC 17061 / DSM 2064 / JCM 8514 / BCRC 14874 / CCUG 350202 / NBRC 14942 / NCIMB 11054 / UW101) (Cytophaga johnsonae).